A 160-amino-acid chain; its full sequence is Lipoprotein signal peptidase (160 aa).

The next 3 membrane-spanning stretches (helical) occupy residues 13-33 (IYIT…RLII), 72-92 (WFLS…ITKL), and 104-124 (SLII…GFVV). Residues aspartate 125 and aspartate 143 contribute to the active site. The chain crosses the membrane as a helical span at residues 134 to 154 (WHFATFNIADCSIFIGIIILM).

This sequence belongs to the peptidase A8 family.

It is found in the cell inner membrane. The enzyme catalyses Release of signal peptides from bacterial membrane prolipoproteins. Hydrolyzes -Xaa-Yaa-Zaa-|-(S,diacylglyceryl)Cys-, in which Xaa is hydrophobic (preferably Leu), and Yaa (Ala or Ser) and Zaa (Gly or Ala) have small, neutral side chains.. It participates in protein modification; lipoprotein biosynthesis (signal peptide cleavage). Its function is as follows. This protein specifically catalyzes the removal of signal peptides from prolipoproteins. The polypeptide is Lipoprotein signal peptidase (Buchnera aphidicola subsp. Acyrthosiphon pisum (strain APS) (Acyrthosiphon pisum symbiotic bacterium)).